Here is a 496-residue protein sequence, read N- to C-terminus: MKKKISEQEIIRHQKMNELKKINIDPFGKKIVPSHSIKQIILQYQKEDSLAFEQSQINVCVAGRIVLKRGQGKAGFLHLQDFDFRIQAYVKLDLVGKDAFQIYQNCDLGDIIGIKGFLFKTKTQELTIKALEFIHLTKALKPLPDKFHGLQNREDMRKKRYVDLIVNEKTRQVFLTRSLIMKYIRNFFDNQGFLEVETPILQPTLGGASAKPFITHHNALNCDFYLRIATELPLKKLIVGGMNKVYEIGRLFRNEGIDATHNPEFSTIEAYLAYADMQDIMDLTKQCLQELVQKIFGKLQFTYQNQEIDFSHFAKVSMVASIKEKTGIDFTDHFTLEQCLSLAKKHKIEVMPHFSQGHIIEAFFGKYVENALIQPTFVYGHPLEISPLAKQNEFDPRFTDRFELFIVGKEFANAFRELNDPIEQEKRFLNQLKQKQLGNEEANDMDYDFLNALNYGMPPTGGLGMGIDRLVMLLTDTANIRDVILFPHCKNQNKFI.

Residues Glu403 and Glu410 each contribute to the Mg(2+) site.

Belongs to the class-II aminoacyl-tRNA synthetase family. As to quaternary structure, homodimer. Requires Mg(2+) as cofactor.

It is found in the cytoplasm. The enzyme catalyses tRNA(Lys) + L-lysine + ATP = L-lysyl-tRNA(Lys) + AMP + diphosphate. In Aster yellows witches'-broom phytoplasma (strain AYWB), this protein is Lysine--tRNA ligase.